Consider the following 308-residue polypeptide: MSSKHVAVLLGGFSSERPVSLSSGTACADALEAEGYRVTRVDVGRDVAAVLQELRPDVVFNALHGPFGEDGTIQGILEYLEIPYTHSGVLASALAMDKDQAKHVAKAAGIPVAEALVMDRRSFGNQHPMKPPYVVKPVREGSSFGVVIVKEDQSHPPQVITSSEWRYGDRVMVERYIAGREFTCGVMGDVALGVTEIIPQGHAFYDYDSKYVKGGSKHVIPAQISPNIYQKIQTLALKAHQAIGCRGVSRSDFRFDDRGDGEGELIWLEINTQPGMTPTSLVPEMAQHAGLQFGEFLRWMVEDASCLR.

An ATP-grasp domain is found at 102-302 (KHVAKAAGIP…FGEFLRWMVE (201 aa)). 128 to 183 (PMKPPYVVKPVREGSSFGVVIVKEDQSHPPQVITSSEWRYGDRVMVERYIAGREFT) serves as a coordination point for ATP. 3 residues coordinate Mg(2+): Asp252, Glu269, and Asn271.

It belongs to the D-alanine--D-alanine ligase family. The cofactor is Mg(2+). Mn(2+) is required as a cofactor.

It is found in the cytoplasm. It carries out the reaction 2 D-alanine + ATP = D-alanyl-D-alanine + ADP + phosphate + H(+). Its pathway is cell wall biogenesis; peptidoglycan biosynthesis. Its function is as follows. Cell wall formation. The polypeptide is D-alanine--D-alanine ligase (Rhizobium meliloti (strain 1021) (Ensifer meliloti)).